The sequence spans 443 residues: Endonuclease CUE2 (443 aa).

2 consecutive CUE domains span residues aspartate 8–aspartate 51 and threonine 55–threonine 98. The region spanning leucine 347–lysine 443 is the Smr domain.

Functionally, mRNA endonuclease involved in the No-Go Decay (NGD) pathway, which catalyzes mRNA cleavage and degradation in response to ribosome collisions. Acts downstream of the ribosome collision sensor HEL2. Specifically recognizes and binds RPS7/eS7 polyubiquitinated by MOT2/NOT4 and HEL2, promoting CUE2 recruitment to stalled ribosomes, where it mediates mRNA cleavage upstream of the colliding ribosome. Also mediates mRNA cleavage within colliding ribosomes: recruited to colliding ribosomes downstream of the RQT (ribosome quality control trigger) complex following disassembly of stalled ribosomes and cleaves mRNAs partially released from the colliding ribosome. The chain is Endonuclease CUE2 from Saccharomyces cerevisiae (strain ATCC 204508 / S288c) (Baker's yeast).